The sequence spans 161 residues: Protein-export protein SecB (161 aa).

The protein belongs to the SecB family. As to quaternary structure, homotetramer, a dimer of dimers. One homotetramer interacts with 1 SecA dimer.

It is found in the cytoplasm. Functionally, one of the proteins required for the normal export of preproteins out of the cell cytoplasm. It is a molecular chaperone that binds to a subset of precursor proteins, maintaining them in a translocation-competent state. It also specifically binds to its receptor SecA. In Methylocella silvestris (strain DSM 15510 / CIP 108128 / LMG 27833 / NCIMB 13906 / BL2), this protein is Protein-export protein SecB.